The following is a 102-amino-acid chain: Heat shock protein HspQ (102 aa).

The protein belongs to the HspQ family.

Its subcellular location is the cytoplasm. Functionally, involved in the degradation of certain denaturated proteins, including DnaA, during heat shock stress. This is Heat shock protein HspQ from Pectobacterium atrosepticum (strain SCRI 1043 / ATCC BAA-672) (Erwinia carotovora subsp. atroseptica).